The sequence spans 284 residues: MSETLDQWRAGLTLGFAPGHAGRTVLRERAHYGPMLVQRALYPEGPQVCHVAILHPPSGIAGGDALEIRVDVAGGARAALTTPGATRWYKSNGRQASQDVHLRVAAGGRLDWLPLESIFFEEADALARNRIQLESGAAAIGWDLIQLGRVNQSGHWSQGRLHTATELYVDGRLLWVDQGLVGAQDDVRRQVSGLAGFPVHAALWSFGPRLDAEQNEELAGLMPWSDTLRGAATTMPYDATQSLCLVRCLGVHMEDVRAVMTDAWAYLRPRVLDTPAVVPRLWAT.

Belongs to the UreD family. In terms of assembly, ureD, UreF and UreG form a complex that acts as a GTP-hydrolysis-dependent molecular chaperone, activating the urease apoprotein by helping to assemble the nickel containing metallocenter of UreC. The UreE protein probably delivers the nickel.

The protein localises to the cytoplasm. In terms of biological role, required for maturation of urease via the functional incorporation of the urease nickel metallocenter. The protein is Urease accessory protein UreD of Bordetella bronchiseptica (strain ATCC BAA-588 / NCTC 13252 / RB50) (Alcaligenes bronchisepticus).